The sequence spans 256 residues: Trans-aconitate 2-methyltransferase (256 aa).

The protein belongs to the methyltransferase superfamily. Tam family.

The protein resides in the cytoplasm. The enzyme catalyses trans-aconitate + S-adenosyl-L-methionine = (E)-3-(methoxycarbonyl)pent-2-enedioate + S-adenosyl-L-homocysteine. Functionally, catalyzes the S-adenosylmethionine monomethyl esterification of trans-aconitate. In Rhodopseudomonas palustris (strain HaA2), this protein is Trans-aconitate 2-methyltransferase.